Consider the following 117-residue polypeptide: Large ribosomal subunit protein bL20 (117 aa).

This sequence belongs to the bacterial ribosomal protein bL20 family.

Binds directly to 23S ribosomal RNA and is necessary for the in vitro assembly process of the 50S ribosomal subunit. It is not involved in the protein synthesizing functions of that subunit. This Carboxydothermus hydrogenoformans (strain ATCC BAA-161 / DSM 6008 / Z-2901) protein is Large ribosomal subunit protein bL20.